Here is a 400-residue protein sequence, read N- to C-terminus: Acetate kinase (400 aa).

Position 10 (Asn-10) interacts with Mg(2+). Lys-17 is an ATP binding site. Arg-91 provides a ligand contact to substrate. Asp-150 serves as the catalytic Proton donor/acceptor. ATP-binding positions include 210–214 (HLGNG), 285–287 (DCR), and 333–337 (GIGEN). Mg(2+) is bound at residue Glu-387.

Belongs to the acetokinase family. Homodimer. It depends on Mg(2+) as a cofactor. The cofactor is Mn(2+).

The protein localises to the cytoplasm. The catalysed reaction is acetate + ATP = acetyl phosphate + ADP. The protein operates within metabolic intermediate biosynthesis; acetyl-CoA biosynthesis; acetyl-CoA from acetate: step 1/2. Its function is as follows. Catalyzes the formation of acetyl phosphate from acetate and ATP. Can also catalyze the reverse reaction. The polypeptide is Acetate kinase (Erwinia tasmaniensis (strain DSM 17950 / CFBP 7177 / CIP 109463 / NCPPB 4357 / Et1/99)).